A 165-amino-acid polypeptide reads, in one-letter code: Phosphopantetheine adenylyltransferase (165 aa).

Thr9 lines the substrate pocket. Residues 9–10 (TF) and His17 contribute to the ATP site. Substrate is bound by residues Lys41, Leu73, and Arg87. Residues 88 to 90 (GLR), Glu98, and 123 to 129 (YQFISGT) contribute to the ATP site.

Belongs to the bacterial CoaD family. Homohexamer. Mg(2+) serves as cofactor.

The protein localises to the cytoplasm. It carries out the reaction (R)-4'-phosphopantetheine + ATP + H(+) = 3'-dephospho-CoA + diphosphate. The protein operates within cofactor biosynthesis; coenzyme A biosynthesis; CoA from (R)-pantothenate: step 4/5. In terms of biological role, reversibly transfers an adenylyl group from ATP to 4'-phosphopantetheine, yielding dephospho-CoA (dPCoA) and pyrophosphate. The sequence is that of Phosphopantetheine adenylyltransferase from Burkholderia vietnamiensis (strain G4 / LMG 22486) (Burkholderia cepacia (strain R1808)).